The chain runs to 302 residues: Ornithine carbamoyltransferase (302 aa).

Residues 52-55 (STRT), Gln79, Arg103, and 130-133 (HPCQ) each bind carbamoyl phosphate. L-ornithine is bound by residues Asn161, Asp221, and 225–226 (SM). Residues 261–262 (CL) and Arg289 contribute to the carbamoyl phosphate site.

This sequence belongs to the aspartate/ornithine carbamoyltransferase superfamily. OTCase family.

The protein localises to the cytoplasm. It carries out the reaction carbamoyl phosphate + L-ornithine = L-citrulline + phosphate + H(+). The protein operates within amino-acid biosynthesis; L-arginine biosynthesis; L-arginine from L-ornithine and carbamoyl phosphate: step 1/3. In terms of biological role, reversibly catalyzes the transfer of the carbamoyl group from carbamoyl phosphate (CP) to the N(epsilon) atom of ornithine (ORN) to produce L-citrulline. The protein is Ornithine carbamoyltransferase of Methanosarcina mazei (strain ATCC BAA-159 / DSM 3647 / Goe1 / Go1 / JCM 11833 / OCM 88) (Methanosarcina frisia).